A 61-amino-acid polypeptide reads, in one-letter code: Small ribosomal subunit protein uS14 (61 aa).

Zn(2+)-binding residues include C24, C27, C40, and C43.

Belongs to the universal ribosomal protein uS14 family. Zinc-binding uS14 subfamily. Part of the 30S ribosomal subunit. Contacts proteins S3 and S10. The cofactor is Zn(2+).

Its function is as follows. Binds 16S rRNA, required for the assembly of 30S particles and may also be responsible for determining the conformation of the 16S rRNA at the A site. The protein is Small ribosomal subunit protein uS14 of Spiroplasma citri.